We begin with the raw amino-acid sequence, 38 residues long: Cytochrome b6-f complex subunit 5 (38 aa).

A helical membrane pass occupies residues 5–25 (LVLGLVMGLVPITLAGLFVAA).

The protein belongs to the PetG family. As to quaternary structure, the 4 large subunits of the cytochrome b6-f complex are cytochrome b6, subunit IV (17 kDa polypeptide, PetD), cytochrome f and the Rieske protein, while the 4 small subunits are PetG, PetL, PetM and PetN. The complex functions as a dimer.

The protein localises to the cellular thylakoid membrane. In terms of biological role, component of the cytochrome b6-f complex, which mediates electron transfer between photosystem II (PSII) and photosystem I (PSI), cyclic electron flow around PSI, and state transitions. PetG is required for either the stability or assembly of the cytochrome b6-f complex. The polypeptide is Cytochrome b6-f complex subunit 5 (Gloeothece citriformis (strain PCC 7424) (Cyanothece sp. (strain PCC 7424))).